A 238-amino-acid chain; its full sequence is Ribosomal RNA small subunit methyltransferase G (238 aa).

Residues Gly80, Ala131–Glu132, and Arg148 each bind S-adenosyl-L-methionine.

This sequence belongs to the methyltransferase superfamily. RNA methyltransferase RsmG family.

Its subcellular location is the cytoplasm. Specifically methylates the N7 position of a guanine in 16S rRNA. The chain is Ribosomal RNA small subunit methyltransferase G from Thermotoga maritima (strain ATCC 43589 / DSM 3109 / JCM 10099 / NBRC 100826 / MSB8).